The primary structure comprises 184 residues: Glutathione-regulated potassium-efflux system ancillary protein KefG (184 aa).

Belongs to the NAD(P)H dehydrogenase (quinone) family. KefG subfamily. As to quaternary structure, interacts with KefB.

It localises to the cell inner membrane. It catalyses the reaction a quinone + NADH + H(+) = a quinol + NAD(+). It carries out the reaction a quinone + NADPH + H(+) = a quinol + NADP(+). Functionally, regulatory subunit of a potassium efflux system that confers protection against electrophiles. Required for full activity of KefB. In Yersinia enterocolitica serotype O:8 / biotype 1B (strain NCTC 13174 / 8081), this protein is Glutathione-regulated potassium-efflux system ancillary protein KefG.